Here is a 125-residue protein sequence, read N- to C-terminus: Protein Turandot F (125 aa).

Residues 1-19 (MKTVILFGFLLALLGYLEA) form the signal peptide.

The protein belongs to the Turandot family.

It is found in the secreted. A humoral factor that may play a role in stress tolerance. This Drosophila melanogaster (Fruit fly) protein is Protein Turandot F.